Here is a 368-residue protein sequence, read N- to C-terminus: Seipin-1 (368 aa).

A run of 3 helical transmembrane segments spans residues 26–46, 101–121, and 292–312; these read WFMV…VVLS, VMVL…SLYV, and LCVW…LWCF. Residues 344-368 form a disordered region; that stretch reads MERRRRERRNQPRRRNFATTQKSYT. Over residues 346-359 the composition is skewed to basic residues; that stretch reads RRRRERRNQPRRRN.

This sequence belongs to the seipin family. In terms of tissue distribution, expressed in seeds and young seedlings. Not detected in leaves.

Its subcellular location is the endoplasmic reticulum membrane. Involved in lipid metabolism and lipid droplet (LD) morphology, number, and size. Facilitates the formation of large-sized LDs and modulates triacylglycerol accumulation. Induces probably a reorganization of the endoplasmic reticulum into LD-forming domains. This Arabidopsis thaliana (Mouse-ear cress) protein is Seipin-1.